The chain runs to 389 residues: Exodeoxyribonuclease 7 large subunit (389 aa).

Belongs to the XseA family. In terms of assembly, heterooligomer composed of large and small subunits.

It localises to the cytoplasm. The enzyme catalyses Exonucleolytic cleavage in either 5'- to 3'- or 3'- to 5'-direction to yield nucleoside 5'-phosphates.. Bidirectionally degrades single-stranded DNA into large acid-insoluble oligonucleotides, which are then degraded further into small acid-soluble oligonucleotides. The chain is Exodeoxyribonuclease 7 large subunit from Pseudothermotoga lettingae (strain ATCC BAA-301 / DSM 14385 / NBRC 107922 / TMO) (Thermotoga lettingae).